Consider the following 610-residue polypeptide: Phosphomethylpyrimidine synthase (610 aa).

Residues asparagine 216, methionine 245, tyrosine 274, histidine 310, 330–332 (SRG), 371–374 (DGLR), and glutamate 410 each bind substrate. Position 414 (histidine 414) interacts with Zn(2+). Tyrosine 437 is a substrate binding site. Histidine 478 serves as a coordination point for Zn(2+). Residues cysteine 558, cysteine 561, and cysteine 566 each coordinate [4Fe-4S] cluster.

The protein belongs to the ThiC family. As to quaternary structure, homodimer. [4Fe-4S] cluster is required as a cofactor.

The enzyme catalyses 5-amino-1-(5-phospho-beta-D-ribosyl)imidazole + S-adenosyl-L-methionine = 4-amino-2-methyl-5-(phosphooxymethyl)pyrimidine + CO + 5'-deoxyadenosine + formate + L-methionine + 3 H(+). Its pathway is cofactor biosynthesis; thiamine diphosphate biosynthesis. In terms of biological role, catalyzes the synthesis of the hydroxymethylpyrimidine phosphate (HMP-P) moiety of thiamine from aminoimidazole ribotide (AIR) in a radical S-adenosyl-L-methionine (SAM)-dependent reaction. In Allorhizobium ampelinum (strain ATCC BAA-846 / DSM 112012 / S4) (Agrobacterium vitis (strain S4)), this protein is Phosphomethylpyrimidine synthase.